Here is a 156-residue protein sequence, read N- to C-terminus: Ribosomal RNA large subunit methyltransferase H (156 aa).

S-adenosyl-L-methionine is bound by residues Leu-73, Gly-104, and 123–128 (VSSLTL).

It belongs to the RNA methyltransferase RlmH family. In terms of assembly, homodimer.

It is found in the cytoplasm. The enzyme catalyses pseudouridine(1915) in 23S rRNA + S-adenosyl-L-methionine = N(3)-methylpseudouridine(1915) in 23S rRNA + S-adenosyl-L-homocysteine + H(+). Its function is as follows. Specifically methylates the pseudouridine at position 1915 (m3Psi1915) in 23S rRNA. The polypeptide is Ribosomal RNA large subunit methyltransferase H (Paraburkholderia phytofirmans (strain DSM 17436 / LMG 22146 / PsJN) (Burkholderia phytofirmans)).